The primary structure comprises 432 residues: Glutamyl-tRNA reductase (432 aa).

Residues 49 to 52 (TCNR), S109, 114 to 116 (EGQ), and Q120 each bind substrate. Catalysis depends on C50, which acts as the Nucleophile. 198-203 (GAGRMS) lines the NADP(+) pocket.

The protein belongs to the glutamyl-tRNA reductase family. In terms of assembly, homodimer.

The catalysed reaction is (S)-4-amino-5-oxopentanoate + tRNA(Glu) + NADP(+) = L-glutamyl-tRNA(Glu) + NADPH + H(+). The protein operates within porphyrin-containing compound metabolism; protoporphyrin-IX biosynthesis; 5-aminolevulinate from L-glutamyl-tRNA(Glu): step 1/2. Its pathway is porphyrin-containing compound metabolism; chlorophyll biosynthesis. Catalyzes the NADPH-dependent reduction of glutamyl-tRNA(Glu) to glutamate 1-semialdehyde (GSA). The sequence is that of Glutamyl-tRNA reductase from Synechococcus sp. (strain CC9902).